The sequence spans 460 residues: Heme sensor protein HssS (460 aa).

Helical transmembrane passes span 11–31 (IYTITVMIFSAVASFLCTNII) and 164–184 (IFLAILITLLLLFSIILVISS). In terms of domain architecture, HAMP spans 186-238 (YAIIKPIQQLKRATERLMHGNFDEVIHVTRKDEFGTLQYRFDKMRLSLKQLDD). Residues 246 to 456 (NVSHEIKTPL…TFTITFKKVP (211 aa)) form the Histidine kinase domain. His249 is subject to Phosphohistidine; by autocatalysis.

Autophosphorylated.

The protein resides in the cell membrane. It carries out the reaction ATP + protein L-histidine = ADP + protein N-phospho-L-histidine.. Its function is as follows. Member of the two-component regulatory system HssS/HssR involved in intracellular heme homeostasis and tempering of staphylococcal virulence. HssS functions as a heme sensor histidine kinase which is autophosphorylated at a histidine residue and transfers its phosphate group to an aspartate residue of HssR. HssR/HssS activates the expression of hrtAB, an efflux pump, in response to extracellular heme, hemin, hemoglobin or blood. The polypeptide is Heme sensor protein HssS (hssS) (Staphylococcus saprophyticus subsp. saprophyticus (strain ATCC 15305 / DSM 20229 / NCIMB 8711 / NCTC 7292 / S-41)).